The primary structure comprises 240 residues: MKRPSGRAADQLRSIRITRNYTKHAEGSVLVEFGDTKVICTVSVENGVPRFLKGQGQGWLTAEYGMLPRATGERNQREASRGKQGGRTLEIQRLIGRSLRAALDMSKLGDVTLYVDCDVIQADGGTRTASITGAMVALVDALKVIKKRGGLKAGDPLKQMIAAVSVGMYQGEPVLDLDYLEDSAAETDLNVVMTSTGGFIEVQGTAEGAPFQPADLNAMLALAQKGMTEIFELQNAALAD.

Phosphate contacts are provided by residues Arg87 and 125-127 (GTR).

The protein belongs to the RNase PH family. In terms of assembly, homohexameric ring arranged as a trimer of dimers.

It carries out the reaction tRNA(n+1) + phosphate = tRNA(n) + a ribonucleoside 5'-diphosphate. Phosphorolytic 3'-5' exoribonuclease that plays an important role in tRNA 3'-end maturation. Removes nucleotide residues following the 3'-CCA terminus of tRNAs; can also add nucleotides to the ends of RNA molecules by using nucleoside diphosphates as substrates, but this may not be physiologically important. Probably plays a role in initiation of 16S rRNA degradation (leading to ribosome degradation) during starvation. This chain is Ribonuclease PH, found in Pseudomonas fluorescens (strain SBW25).